We begin with the raw amino-acid sequence, 205 residues long: Ribosomal RNA small subunit methyltransferase G (205 aa).

Residues G73, L78, 124–125 (VE), and R138 contribute to the S-adenosyl-L-methionine site.

Belongs to the methyltransferase superfamily. RNA methyltransferase RsmG family.

The protein localises to the cytoplasm. The catalysed reaction is guanosine(527) in 16S rRNA + S-adenosyl-L-methionine = N(7)-methylguanosine(527) in 16S rRNA + S-adenosyl-L-homocysteine. Functionally, specifically methylates the N7 position of guanine in position 527 of 16S rRNA. The polypeptide is Ribosomal RNA small subunit methyltransferase G (Actinobacillus pleuropneumoniae serotype 7 (strain AP76)).